The primary structure comprises 379 residues: Lipid-A-disaccharide synthase (379 aa).

The protein belongs to the LpxB family.

It carries out the reaction a lipid X + a UDP-2-N,3-O-bis[(3R)-3-hydroxyacyl]-alpha-D-glucosamine = a lipid A disaccharide + UDP + H(+). Its pathway is bacterial outer membrane biogenesis; LPS lipid A biosynthesis. Functionally, condensation of UDP-2,3-diacylglucosamine and 2,3-diacylglucosamine-1-phosphate to form lipid A disaccharide, a precursor of lipid A, a phosphorylated glycolipid that anchors the lipopolysaccharide to the outer membrane of the cell. In Vibrio campbellii (strain ATCC BAA-1116), this protein is Lipid-A-disaccharide synthase.